Reading from the N-terminus, the 285-residue chain is Glycine--tRNA ligase alpha subunit (285 aa).

Belongs to the class-II aminoacyl-tRNA synthetase family. In terms of assembly, tetramer of two alpha and two beta subunits.

The protein localises to the cytoplasm. It catalyses the reaction tRNA(Gly) + glycine + ATP = glycyl-tRNA(Gly) + AMP + diphosphate. This chain is Glycine--tRNA ligase alpha subunit, found in Thermodesulfovibrio yellowstonii (strain ATCC 51303 / DSM 11347 / YP87).